Reading from the N-terminus, the 1017-residue chain is Disease resistance protein RML1B (1017 aa).

Positions 12-176 (YKFNVFASFH…KIARDVLDKL (165 aa)) constitute a TIR domain. The active site involves Glu87. The NB-ARC domain occupies 191–447 (EAHLREIKSL…HIAIFFNKED (257 aa)). LRR repeat units lie at residues 539–562 (ISRI…QFLK), 583–605 (PCLL…TFNP), 606–628 (EHLV…TQPL), 629–652 (KNLK…SNAT), 654–675 (LEYL…ISHL), 676–698 (HKLE…HMNL), 699–724 (ESLQ…NIRY), 738–760 (CPGL…THLP), 761–782 (TSLT…CFKS), and 784–809 (HQLK…SLLT).

The catalysed reaction is NAD(+) + H2O = ADP-D-ribose + nicotinamide + H(+). Functionally, TIR-NB-LRR receptor-like protein that confers resistance to the pathogen Leptosphaeria maculans (blackleg disease). The polypeptide is Disease resistance protein RML1B (Arabidopsis thaliana (Mouse-ear cress)).